Reading from the N-terminus, the 369-residue chain is Anhydro-N-acetylmuramic acid kinase (369 aa).

Position 12–19 (12–19) interacts with ATP; the sequence is GTSLDGVD.

The protein belongs to the anhydro-N-acetylmuramic acid kinase family.

It carries out the reaction 1,6-anhydro-N-acetyl-beta-muramate + ATP + H2O = N-acetyl-D-muramate 6-phosphate + ADP + H(+). It functions in the pathway amino-sugar metabolism; 1,6-anhydro-N-acetylmuramate degradation. It participates in cell wall biogenesis; peptidoglycan recycling. In terms of biological role, catalyzes the specific phosphorylation of 1,6-anhydro-N-acetylmuramic acid (anhMurNAc) with the simultaneous cleavage of the 1,6-anhydro ring, generating MurNAc-6-P. Is required for the utilization of anhMurNAc either imported from the medium or derived from its own cell wall murein, and thus plays a role in cell wall recycling. This chain is Anhydro-N-acetylmuramic acid kinase, found in Escherichia coli (strain K12 / MC4100 / BW2952).